Reading from the N-terminus, the 90-residue chain is Small ribosomal subunit protein bS18 (90 aa).

The disordered stretch occupies residues 1 to 23 (MKPMRQKNTRAQGNKSISNALAS). Over residues 9 to 21 (TRAQGNKSISNAL) the composition is skewed to polar residues.

This sequence belongs to the bacterial ribosomal protein bS18 family. Part of the 30S ribosomal subunit. Forms a tight heterodimer with protein bS6.

In terms of biological role, binds as a heterodimer with protein bS6 to the central domain of the 16S rRNA, where it helps stabilize the platform of the 30S subunit. This Chlorobium luteolum (strain DSM 273 / BCRC 81028 / 2530) (Pelodictyon luteolum) protein is Small ribosomal subunit protein bS18.